The sequence spans 91 residues: Cell division protein ZapA (91 aa).

The stretch at 59–86 (TAVNIANEYLKLKEEYDRLAAKLRREKG) forms a coiled coil.

Belongs to the ZapA family. Type 2 subfamily. In terms of assembly, homodimer. Interacts with FtsZ.

The protein localises to the cytoplasm. Functionally, activator of cell division through the inhibition of FtsZ GTPase activity, therefore promoting FtsZ assembly into bundles of protofilaments necessary for the formation of the division Z ring. It is recruited early at mid-cell but it is not essential for cell division. The protein is Cell division protein ZapA of Geobacillus thermodenitrificans (strain NG80-2).